We begin with the raw amino-acid sequence, 516 residues long: NAD(P)H-quinone oxidoreductase chain 4, chloroplastic (516 aa).

Transmembrane regions (helical) follow at residues 4-24 (FPWLTIIVVFPILTGSLIFLL), 37-57 (LCICILELLLTTYTFCYHFQL), 87-107 (IGPILLTGFITTLATLAAWPV), 111-131 (AQLFHFLMLAMYSGQIGSFSS), 134-154 (LLLFFLMWEFELIPVYLLLSM), 167-187 (FILYTAGGSIFLLIGVLGIGL), 208-228 (ALEVIFYVGFLIAFAVKLPII), 242-262 (HYSTCMLLAGILLKMGAYGLV), 272-292 (AHCLFSPGLIIVGAIQIIYAA), 305-325 (IAYSSISHMGFIIIGIGSLSD), 330-350 (GAILQIISHGFIGAALFFLAG), 386-406 (LALPGLSGFVAELLVFFGIIT), 416-436 (ILIAFLMAIGMILTPIYSLSM), and 462-482 (LFVSISLLLPIIGIGIYPDFV).

It belongs to the complex I subunit 4 family.

Its subcellular location is the plastid. It localises to the chloroplast thylakoid membrane. The enzyme catalyses a plastoquinone + NADH + (n+1) H(+)(in) = a plastoquinol + NAD(+) + n H(+)(out). It carries out the reaction a plastoquinone + NADPH + (n+1) H(+)(in) = a plastoquinol + NADP(+) + n H(+)(out). The chain is NAD(P)H-quinone oxidoreductase chain 4, chloroplastic from Oenothera argillicola (Appalachian evening primrose).